The primary structure comprises 406 residues: Digeranylgeranylglycerophospholipid reductase 2 (406 aa).

Residues Gly15, Glu34, Cys45, Ala46, Gly48, Arg99, Ala123, Asp279, Gly291, and Ile292 each coordinate FAD.

It belongs to the geranylgeranyl reductase family. DGGGPL reductase subfamily. Requires FAD as cofactor.

The catalysed reaction is a 2,3-bis-O-phytanyl-sn-glycerol 1-phospholipid + 8 oxidized 2[4Fe-4S]-[ferredoxin] = a 2,3-bis-O-(geranylgeranyl)-sn-glycerol 1-phospholipid + 8 reduced 2[4Fe-4S]-[ferredoxin] + 16 H(+). It carries out the reaction 2,3-bis-O-(phytanyl)-sn-glycerol 1-phosphate + 8 oxidized 2[4Fe-4S]-[ferredoxin] = 2,3-bis-O-(geranylgeranyl)-sn-glycerol 1-phosphate + 8 reduced 2[4Fe-4S]-[ferredoxin] + 16 H(+). The enzyme catalyses a 2,3-bis-O-phytanyl-sn-glycerol 1-phospholipid + 8 A = a 2,3-bis-O-(geranylgeranyl)-sn-glycerol 1-phospholipid + 8 AH2. It catalyses the reaction CDP-2,3-bis-O-(geranylgeranyl)-sn-glycerol + 8 AH2 = CDP-2,3-bis-O-(phytanyl)-sn-glycerol + 8 A. The catalysed reaction is archaetidylserine + 8 AH2 = 2,3-bis-O-phytanyl-sn-glycero-3-phospho-L-serine + 8 A. The protein operates within membrane lipid metabolism; glycerophospholipid metabolism. Is involved in the reduction of 2,3-digeranylgeranylglycerophospholipids (unsaturated archaeols) into 2,3-diphytanylglycerophospholipids (saturated archaeols) in the biosynthesis of archaeal membrane lipids. Catalyzes the formation of archaetidic acid (2,3-di-O-phytanyl-sn-glyceryl phosphate) from 2,3-di-O-geranylgeranylglyceryl phosphate (DGGGP) via the hydrogenation of each double bond of the isoprenoid chains. Is also probably able to reduce double bonds of geranyl groups in CDP-2,3-bis-O-(geranylgeranyl)-sn-glycerol and archaetidylserine, thus acting at various stages in the biosynthesis of archaeal membrane lipids. In Methanococcoides burtonii (strain DSM 6242 / NBRC 107633 / OCM 468 / ACE-M), this protein is Digeranylgeranylglycerophospholipid reductase 2.